Consider the following 129-residue polypeptide: Membrane protein 0 (129 aa).

The segment at 1 to 25 (MATVHYSRRPGTPPVTLTSSPSMDD) is disordered. The PPXY motif motif lies at 44-47 (PPPY). The chain crosses the membrane as a helical span at residues 100–120 (FLILFGILTLTAVVVAIVAVF).

Belongs to the varicellovirus ORF0 protein family. In terms of assembly, interacts with host ITCH; this interaction probably mediates ITCH degradation.

It localises to the host Golgi apparatus membrane. The sequence is that of Membrane protein 0 from Homo sapiens (Human).